The following is a 537-amino-acid chain: Serendipity locus protein alpha (537 aa).

The protein resides in the cytoplasm. The protein localises to the cell membrane. Its function is as follows. Required for the cellularization of the syncytial blastoderm embryo. Involved in the localization of the actin filaments just prior to and during plasma membrane invagination. Sry-alpha together with nullo and bnk may provide auxiliary functions, by acting both to stabilize a large and dynamic microfilament structure and regulate its functions. In Drosophila virilis (Fruit fly), this protein is Serendipity locus protein alpha (Sry-alpha).